We begin with the raw amino-acid sequence, 260 residues long: Aspartate/glutamate leucyltransferase (260 aa).

It belongs to the R-transferase family. Bpt subfamily.

It localises to the cytoplasm. The catalysed reaction is N-terminal L-glutamyl-[protein] + L-leucyl-tRNA(Leu) = N-terminal L-leucyl-L-glutamyl-[protein] + tRNA(Leu) + H(+). The enzyme catalyses N-terminal L-aspartyl-[protein] + L-leucyl-tRNA(Leu) = N-terminal L-leucyl-L-aspartyl-[protein] + tRNA(Leu) + H(+). Its function is as follows. Functions in the N-end rule pathway of protein degradation where it conjugates Leu from its aminoacyl-tRNA to the N-termini of proteins containing an N-terminal aspartate or glutamate. The polypeptide is Aspartate/glutamate leucyltransferase (Sphingomonas elodea).